Consider the following 148-residue polypeptide: SsrA-binding protein (148 aa).

This sequence belongs to the SmpB family.

The protein resides in the cytoplasm. Its function is as follows. Required for rescue of stalled ribosomes mediated by trans-translation. Binds to transfer-messenger RNA (tmRNA), required for stable association of tmRNA with ribosomes. tmRNA and SmpB together mimic tRNA shape, replacing the anticodon stem-loop with SmpB. tmRNA is encoded by the ssrA gene; the 2 termini fold to resemble tRNA(Ala) and it encodes a 'tag peptide', a short internal open reading frame. During trans-translation Ala-aminoacylated tmRNA acts like a tRNA, entering the A-site of stalled ribosomes, displacing the stalled mRNA. The ribosome then switches to translate the ORF on the tmRNA; the nascent peptide is terminated with the 'tag peptide' encoded by the tmRNA and targeted for degradation. The ribosome is freed to recommence translation, which seems to be the essential function of trans-translation. The chain is SsrA-binding protein from Ehrlichia ruminantium (strain Gardel).